Consider the following 423-residue polypeptide: Zinc finger protein Gfi-1 (423 aa).

Positions 1–20 (MPRSFLVKSKKAHSYHQPRS) are SNAG domain. The interval 1 to 76 (MPRSFLVKSK…DRASASPNSC (76 aa)) is disordered. Residues Ser-20 and Ser-57 each carry the phosphoserine modification. Basic and acidic residues predominate over residues 48-57 (SKMEPRERLS). The segment at 141–258 (RQCSALERSA…LLLGGGSYKC (118 aa)) is required for interaction with RELA. 6 consecutive C2H2-type zinc fingers follow at residues 256 to 279 (YKCI…RRSH), 285 to 307 (FACE…KAVH), 313 to 335 (FDCK…LLIH), 341 to 363 (YPCQ…TFIH), 369 to 391 (HKCQ…SRKH), and 397 to 420 (FGCD…ETQH).

As to quaternary structure, interacts (via the zinc-finger domain) with ARIH2; the interaction prevents GFI1 ubiquitination and proteasomal degradation. Forms a complex with EHMT2 and HDAC1 to promote 'Lys-9' dimethylation of H3 (H3K9Me2) and repress expression of target genes. Interacts directly with EHMT2. Interacts with RUNX1T1; the interaction represses HDAC-mediated transcriptional activity. Interacts (via the C-terminal zinc fingers) with ZBTB17; the interaction results in the recruitment of GFI1 to the CDKN1A/p21 and CDKNIB promoters and repression of transcription. Interacts with U2AF1L4. Component of RCOR-GFI-KDM1A-HDAC complexes. Interacts directly with RCOR1, KDM1A and HDAC2. Also interacts with HDAC1. Component of the GFI1-AJUBA-HDAC1 repressor complex. Interacts directly with AJUBA (via its LIM domains); the interaction results in the HDAC-dependent corepression of a subset of GFI1 target genes and, occurs independently of the SNAG domain. Interacts with SPI1; the interaction inhibits SPI1 transcriptional activity targeted at macrophage-specific genes, repressing macrophage differentiation of myeloid progenitor cells and promoting granulocyte commitment. Interacts with PIAS3; the interaction relieves the inhibitory effect of PIAS3 on STAT3-mediated transcriptional activity. Interacts with RELA; the interaction occurs on liposaccharide (LPS) stimulation and controls RELA DNA binding activity and regulates endotoxin-mediated TOLL-like receptor inflammatory response. In terms of processing, ubiquitinated.

It localises to the nucleus. Functionally, transcription repressor essential for hematopoiesis. Functions in a cell-context and development-specific manner. Binds to 5'-TAAATCAC[AT]GCA-3' in the promoter region of a large number of genes. Component of several complexes, including the EHMT2-GFI1-HDAC1, AJUBA-GFI1-HDAC1 and RCOR-GFI-KDM1A-HDAC complexes, that suppress, via histone deacetylase (HDAC) recruitment, a number of genes implicated in multilineage blood cell development. Regulates neutrophil differentiation, promotes proliferation of lymphoid cells, and is required for granulocyte development. Inhibits SPI1 transcriptional activity at macrophage-specific genes, repressing macrophage differentiation of myeloid progenitor cells and promoting granulocyte commitment. Mediates, together with U2AF1L4, the alternative splicing of CD45 and controls T-cell receptor signaling. Regulates the endotoxin-mediated Toll-like receptor (TLR) inflammatory response by antagonizing RELA. Cooperates with CBFA2T2 to regulate ITGB1-dependent neurite growth. Controls cell-cycle progression by repressing CDKNIA/p21 transcription in response to TGFB1 via recruitment of GFI1 by ZBTB17 to the CDKNIA/p21 and CDKNIB promoters. Required for the maintenance of inner ear hair cells. In addition to its role in transcription, acts as a substrate adapter for PRMT1 in the DNA damage response. Facilitates the recognition of TP53BP1 and MRE11 substrates by PRMT1, promoting their methylation and the DNA damage response. The protein is Zinc finger protein Gfi-1 (Gfi1) of Mus musculus (Mouse).